A 202-amino-acid polypeptide reads, in one-letter code: N-(5'-phosphoribosyl)anthranilate isomerase (202 aa).

It belongs to the TrpF family.

The catalysed reaction is N-(5-phospho-beta-D-ribosyl)anthranilate = 1-(2-carboxyphenylamino)-1-deoxy-D-ribulose 5-phosphate. It functions in the pathway amino-acid biosynthesis; L-tryptophan biosynthesis; L-tryptophan from chorismate: step 3/5. The sequence is that of N-(5'-phosphoribosyl)anthranilate isomerase from Listeria monocytogenes serotype 4b (strain F2365).